The chain runs to 419 residues: UPF0329 protein ECU07_1890/ECU10_0010 (419 aa).

Basic and acidic residues predominate over residues 136–165; it reads RQRKREEETERSVKELVGDEEKAKSKEEKA. The disordered stretch occupies residues 136 to 222; sequence RQRKREEETE…KGGKKKSKGG (87 aa). The span at 213-222 shows a compositional bias: basic residues; that stretch reads KGGKKKSKGG.

This sequence belongs to the UPF0329 family.

The chain is UPF0329 protein ECU07_1890/ECU10_0010 from Encephalitozoon cuniculi (strain GB-M1) (Microsporidian parasite).